We begin with the raw amino-acid sequence, 467 residues long: UPF0236 protein TTE0610/TTE0881/TTE1053/TTE2432 (467 aa).

The protein belongs to the UPF0236 family.

The polypeptide is UPF0236 protein TTE0610/TTE0881/TTE1053/TTE2432 (Caldanaerobacter subterraneus subsp. tengcongensis (strain DSM 15242 / JCM 11007 / NBRC 100824 / MB4) (Thermoanaerobacter tengcongensis)).